Consider the following 500-residue polypeptide: Aldehyde dehydrogenase (500 aa).

246 to 251 (GSTLVG) is a binding site for NAD(+). Residue Glu-269 is the Proton acceptor of the active site. The active-site Nucleophile is the Cys-303.

It belongs to the aldehyde dehydrogenase family.

It catalyses the reaction an aldehyde + NAD(+) + H2O = a carboxylate + NADH + 2 H(+). It functions in the pathway alcohol metabolism; ethanol degradation; acetate from ethanol: step 2/2. The sequence is that of Aldehyde dehydrogenase (aldA) from Agaricus bisporus (White button mushroom).